The primary structure comprises 423 residues: Probable baseplate hub protein gp334 (423 aa).

As to quaternary structure, homotrimer. Interacts with gp5 trimer.

It localises to the virion. In terms of biological role, baseplate protein that is part of the baseplate hub. Involved in the tail assembly. The protein is Probable baseplate hub protein gp334 of Vibrio parahaemolyticus (KVP40).